Here is a 704-residue protein sequence, read N- to C-terminus: Ion-translocating oxidoreductase complex subunit C (704 aa).

4Fe-4S ferredoxin-type domains are found at residues 368–397 (MGAP…QQLY) and 407–436 (KATA…VQYF). Residues C377, C380, C383, C387, C416, C419, C422, and C426 each coordinate [4Fe-4S] cluster. The tract at residues 535-684 (ARAKQAAHPM…PADPRKAAVA (150 aa)) is disordered. The span at 556 to 565 (KAAVEAAIAR) shows a compositional bias: low complexity.

The protein belongs to the 4Fe4S bacterial-type ferredoxin family. RnfC subfamily. As to quaternary structure, the complex is composed of six subunits: RsxA, RsxB, RsxC, RsxD, RsxE and RsxG. [4Fe-4S] cluster is required as a cofactor.

The protein resides in the cell inner membrane. In terms of biological role, part of a membrane-bound complex that couples electron transfer with translocation of ions across the membrane. Required to maintain the reduced state of SoxR. The sequence is that of Ion-translocating oxidoreductase complex subunit C from Salmonella paratyphi C (strain RKS4594).